We begin with the raw amino-acid sequence, 126 residues long: Anti-adapter protein IraD (126 aa).

This sequence belongs to the GpW/Gp25 family. IraD subfamily. As to quaternary structure, interacts with RssB.

It is found in the cytoplasm. Its function is as follows. Inhibits RpoS proteolysis by regulating RssB activity, thereby increasing the stability of the sigma stress factor RpoS during oxidative stress. Its effect on RpoS stability is due to its interaction with RssB, which probably blocks the interaction of RssB with RpoS, and the consequent delivery of the RssB-RpoS complex to the ClpXP protein degradation pathway. In Salmonella choleraesuis (strain SC-B67), this protein is Anti-adapter protein IraD.